A 1002-amino-acid chain; its full sequence is ATP-dependent DNA helicase MPH1 (1002 aa).

Residues 108-275 enclose the Helicase ATP-binding domain; it reads IVRCALFENV…EVVNNLHISK (168 aa). An ATP-binding site is contributed by 121 to 128; sequence IPTGTGKT. The DEAH box motif lies at 223-226; sequence DEAH. Residues 506–669 enclose the Helicase C-terminal domain; it reads DEETYIRKNK…ALEYTKSDRI (164 aa). Basic and acidic residues predominate over residues 531–551; it reads ENRVEEEKKRQKEQAKLERTG. 2 disordered regions span residues 531 to 569 and 799 to 843; these read ENRV…NQKQ and AKSQ…DSHT. A compositionally biased stretch (polar residues) spans 553 to 568; the sequence is RTGSSEEAQLSGMNQK.

It belongs to the DEAD box helicase family. DEAH subfamily. FANCM sub-subfamily. As to quaternary structure, interacts with the MHF histone-fold complex to form the FANCM-MHF complex.

It is found in the nucleus. It carries out the reaction ATP + H2O = ADP + phosphate + H(+). ATP-dependent DNA helicase involved in DNA damage repair by homologous recombination and in genome maintenance. Capable of unwinding D-loops. Plays a role in limiting crossover recombinants during mitotic DNA double-strand break (DSB) repair. Component of a FANCM-MHF complex which promotes gene conversion at blocked replication forks, probably by reversal of the stalled fork. The polypeptide is ATP-dependent DNA helicase MPH1 (Kluyveromyces lactis (strain ATCC 8585 / CBS 2359 / DSM 70799 / NBRC 1267 / NRRL Y-1140 / WM37) (Yeast)).